The following is a 151-amino-acid chain: MCDFSEEQTAEFKEAFQLFDRTGDGKILYSQCGDVMRALGQNPTNAEVMKVLGNPKSDEMNLKTLKFEQFLPMMQTIAKNKDQGCFEDYVEGLRVFDKEGNGTVMGAEIRHVLVTLGEKMTEEEVEQLVAGHEDSNGCINYEELVRMVLSG.

The residue at position 2 (C2) is an N-acetylcysteine. EF-hand domains follow at residues 7-42 (EQTA…LGQN), 84-119 (GCFE…LGEK), and 119-151 (KMTE…VLSG).

In terms of assembly, myosin is a hexamer of 2 heavy chains and 4 light chains.

Regulatory light chain of myosin. Does not bind calcium. The protein is Myosin light polypeptide 6 (MYL6) of Gallus gallus (Chicken).